The following is a 188-amino-acid chain: Crossover junction endodeoxyribonuclease RuvC (188 aa).

Catalysis depends on residues D7, E68, and D141. D7, E68, and D141 together coordinate Mg(2+).

Belongs to the RuvC family. Homodimer which binds Holliday junction (HJ) DNA. The HJ becomes 2-fold symmetrical on binding to RuvC with unstacked arms; it has a different conformation from HJ DNA in complex with RuvA. In the full resolvosome a probable DNA-RuvA(4)-RuvB(12)-RuvC(2) complex forms which resolves the HJ. Mg(2+) is required as a cofactor.

The protein localises to the cytoplasm. The catalysed reaction is Endonucleolytic cleavage at a junction such as a reciprocal single-stranded crossover between two homologous DNA duplexes (Holliday junction).. Functionally, the RuvA-RuvB-RuvC complex processes Holliday junction (HJ) DNA during genetic recombination and DNA repair. Endonuclease that resolves HJ intermediates. Cleaves cruciform DNA by making single-stranded nicks across the HJ at symmetrical positions within the homologous arms, yielding a 5'-phosphate and a 3'-hydroxyl group; requires a central core of homology in the junction. The consensus cleavage sequence is 5'-(A/T)TT(C/G)-3'. Cleavage occurs on the 3'-side of the TT dinucleotide at the point of strand exchange. HJ branch migration catalyzed by RuvA-RuvB allows RuvC to scan DNA until it finds its consensus sequence, where it cleaves and resolves the cruciform DNA. The polypeptide is Crossover junction endodeoxyribonuclease RuvC (Mycobacterium avium (strain 104)).